Reading from the N-terminus, the 280-residue chain is Type II restriction enzyme MboI (280 aa).

This sequence belongs to the DpnII type II restriction endonuclease family.

The enzyme catalyses Endonucleolytic cleavage of DNA to give specific double-stranded fragments with terminal 5'-phosphates.. In terms of biological role, a P subtype restriction enzyme that recognizes the double-stranded unmethylated sequence 5'-GATC-3' and cleaves before G-1. The sequence is that of Type II restriction enzyme MboI (mboIR) from Moraxella bovis.